Reading from the N-terminus, the 450-residue chain is Cysteine proteinase (450 aa).

Positions 1-20 (MPRTEMVRFVRLPVVLLAMA) are cleaved as a signal peptide. A propeptide spans 21-125 (ACLASVALGS…RKTVNVTTGR (105 aa)) (activation peptide). N120 carries N-linked (GlcNAc...) asparagine glycosylation. A disulfide bridge links C147 with C188. Catalysis depends on residues C150, H287, and N307. Residues 343–450 (TPPPPPPPPP…TKAARLVPHQ (108 aa)) form a 108-residue extension region. Residue N397 is glycosylated (N-linked (GlcNAc...) asparagine).

Belongs to the peptidase C1 family.

The protein localises to the lysosome. Its function is as follows. The cysteine proteinases have a potential role in host-parasite interaction and virulence. The polypeptide is Cysteine proteinase (Trypanosoma brucei brucei).